Consider the following 441-residue polypeptide: Ribulose bisphosphate carboxylase large chain (441 aa).

K5 carries the N6,N6,N6-trimethyllysine modification. Substrate contacts are provided by N114 and T164. K166 functions as the Proton acceptor in the catalytic mechanism. K168 contributes to the substrate binding site. Mg(2+) contacts are provided by K192, D194, and E195. At K192 the chain carries N6-carboxylysine. H285 serves as the catalytic Proton acceptor. Substrate-binding residues include R286, H318, and S370.

Belongs to the RuBisCO large chain family. Type I subfamily. As to quaternary structure, heterohexadecamer of 8 large chains and 8 small chains; disulfide-linked. The disulfide link is formed within the large subunit homodimers. Mg(2+) is required as a cofactor. In terms of processing, the disulfide bond which can form in the large chain dimeric partners within the hexadecamer appears to be associated with oxidative stress and protein turnover.

It localises to the plastid. The protein resides in the chloroplast. It catalyses the reaction 2 (2R)-3-phosphoglycerate + 2 H(+) = D-ribulose 1,5-bisphosphate + CO2 + H2O. It carries out the reaction D-ribulose 1,5-bisphosphate + O2 = 2-phosphoglycolate + (2R)-3-phosphoglycerate + 2 H(+). In terms of biological role, ruBisCO catalyzes two reactions: the carboxylation of D-ribulose 1,5-bisphosphate, the primary event in carbon dioxide fixation, as well as the oxidative fragmentation of the pentose substrate in the photorespiration process. Both reactions occur simultaneously and in competition at the same active site. This is Ribulose bisphosphate carboxylase large chain from Drosera petiolaris (Woolly sundew).